We begin with the raw amino-acid sequence, 294 residues long: MTGPSVHDRALGAFLGLAVGDALGATVEFMTKGEIAQQYGIHRKMTGGGWLRLKPGQITDDTEMSLALGRSLAAKGTLDVADICEEFALWLKSRPVDVGNTCRRGIRRYMHEGTTTAPYSEGDAGNGAAMRCLPAALATLGHPADLEPWVLAQARITHNHPLSDAACLTLGRMVHHLIGGRGMKACREEANRLVHQHRDFHFEPYKGQSSAYIVDTMQTVLHYYFVTDTFKSCLIQTVNQGGDADTTGALAGMLAGATYGVDDIPSGWLSKLDMKVEREIRRQVDALLALAGLD.

ADP-D-ribose contacts are provided by residues 100 to 102 (NTC), glutamate 121, histidine 158, and tyrosine 212. Mn(2+)-binding residues include aspartate 243, aspartate 245, and threonine 246.

Belongs to the ADP-ribosylglycohydrolase family. As to quaternary structure, monomer. Mn(2+) is required as a cofactor.

It is found in the cytoplasm. The catalysed reaction is N(omega)-alpha-(ADP-D-ribosyl)-L-arginyl-[dinitrogen reductase] + H2O = L-arginyl-[dinitrogen reductase] + ADP-D-ribose. In terms of biological role, involved in the regulation of nitrogen fixation activity by the reversible ADP-ribosylation of one subunit of the homodimeric dinitrogenase reductase component of the nitrogenase enzyme complex. The ADP-ribosyltransferase (DraT) transfers the ADP-ribose group from NAD to dinitrogenase reductase. The ADP-ribose group is removed through the action of the ADP-ribosylglycohydrolase (DraG, this entry). The sequence is that of ADP-ribosyl-[dinitrogen reductase] glycohydrolase from Rhodospirillum rubrum.